We begin with the raw amino-acid sequence, 864 residues long: Leucine--tRNA ligase (864 aa).

The 'HIGH' region signature appears at proline 42 to histidine 52. A 'KMSKS' region motif is present at residues lysine 624–serine 628. Residue lysine 627 coordinates ATP.

Belongs to the class-I aminoacyl-tRNA synthetase family.

The protein resides in the cytoplasm. The catalysed reaction is tRNA(Leu) + L-leucine + ATP = L-leucyl-tRNA(Leu) + AMP + diphosphate. This Burkholderia pseudomallei (strain 1710b) protein is Leucine--tRNA ligase.